Consider the following 456-residue polypeptide: Yersinopine synthase (456 aa).

NADP(+) contacts are provided by residues 12 to 15 (AGPA), 35 to 40 (NRPSTK), and Thr-154. His-242 acts as the Proton donor/acceptor in catalysis.

This sequence belongs to the staphylopine dehydrogenase family. In terms of assembly, homodimer.

The catalysed reaction is yersinopine + NADP(+) + H2O = (2S)-2-amino-4-{[(1S)-1-carboxy-2-(1H-imidazol-4-yl)ethyl]amino}butanoate + pyruvate + NADPH + H(+). Catalyzes the NADPH-dependent reductive condensation of pyruvate to the intermediate formed by the adjacently encoded enzyme y2836, namely (2S)-2-amino-4-{[(1S)-1-carboxy-2-(1H-imidazol-4-yl)ethyl]amino}butanoate, leading to the production of yersinopine. This is the last step in the biosynthesis of the metallophore yersinopine, which is involved in metal acquisition and thus enables bacterial growth inside the host, where metal access is limited. Therefore, this enzyme probably contributes to Yersinia virulence. Cannot use alpha-ketoglutarate in place of pyruvate, and displays only poor efficiency with oxaloacetate and glyoxylate. The sequence is that of Yersinopine synthase from Yersinia pestis.